A 164-amino-acid chain; its full sequence is MNILFLIYLKDKRSARQCPAAFLPSFSEFPLRIGSCAHICQSFTEKKKEHWVTSEKLLTQCNSVIILCAVSLKKNQECKISINSLEVMMVSLSLTLLKKGFFSWSTLFRGKKKKKKKKKRILHVIYHDSTFLQAKMKIIRAHAQVVPAMPLRKNFRNQYSLHPP.

This is an uncharacterized protein from Saccharomyces cerevisiae (strain ATCC 204508 / S288c) (Baker's yeast).